A 292-amino-acid polypeptide reads, in one-letter code: DCN1-like protein 4 (292 aa).

Residues 43–83 are disordered; the sequence is HQTGSLRSCSSSDCFNKVMPPRKKRRPASGDDLSAKKSRHD. Residues 45–56 show a composition bias toward polar residues; the sequence is TGSLRSCSSSDC. Lysine 95 is covalently cross-linked (Glycyl lysine isopeptide (Lys-Gly) (interchain with G-Cter in SUMO2)). One can recognise a DCUN1 domain in the interval 101–287; sequence FSSKRCLEWF…LLDEFVEWYK (187 aa).

Interacts (via the DCUN1 domain) with the unneddylated cullins: interacts with CUL1, CUL2, CUL3, CUL4A, CUL4B and CUL5; these interactions promote the cullin neddylation and the identity of the cullin dictates the affinity of the interaction. Interacts with RBX1 and RNF7. Interacts with CAND1; this interaction is bridged by cullins such as CUL3 and strongly inhibits the neddylation of CUL3. These CAND-cullin-DCNL complexes can only be neddylated in the presence of a substrate adapter. Interacts (via DCUN1 domain) with UBE2M (N-terminally acetylated form) and probably with UBE2F (N-terminally acetylated form).

It is found in the nucleus. Its function is as follows. Contributes to the neddylation of all cullins by transferring NEDD8 from N-terminally acetylated NEDD8-conjugating E2s enzyme to different cullin C-terminal domain-RBX complexes which are necessary for the activation of cullin-RING E3 ubiquitin ligases (CRLs). The sequence is that of DCN1-like protein 4 from Homo sapiens (Human).